The chain runs to 879 residues: Valine--tRNA ligase (879 aa).

A 'HIGH' region motif is present at residues 45–55 (PNVTGKLHLGH). The short motif at 521–525 (KMSKS) is the 'KMSKS' region element. Residue lysine 524 coordinates ATP. A coiled-coil region spans residues 806–879 (LTELVNVDEE…ERMKELKESK (74 aa)).

This sequence belongs to the class-I aminoacyl-tRNA synthetase family. ValS type 1 subfamily. As to quaternary structure, monomer.

It is found in the cytoplasm. The enzyme catalyses tRNA(Val) + L-valine + ATP = L-valyl-tRNA(Val) + AMP + diphosphate. Functionally, catalyzes the attachment of valine to tRNA(Val). As ValRS can inadvertently accommodate and process structurally similar amino acids such as threonine, to avoid such errors, it has a 'posttransfer' editing activity that hydrolyzes mischarged Thr-tRNA(Val) in a tRNA-dependent manner. The chain is Valine--tRNA ligase from Lactobacillus johnsonii (strain CNCM I-12250 / La1 / NCC 533).